The primary structure comprises 68 residues: Large ribosomal subunit protein uL30 (68 aa).

Belongs to the universal ribosomal protein uL30 family. In terms of assembly, part of the 50S ribosomal subunit.

The polypeptide is Large ribosomal subunit protein uL30 (Paenarthrobacter aurescens (strain TC1)).